The following is a 250-amino-acid chain: Replicating protein (250 aa).

Disordered stretches follow at residues 1 to 23 (MFQQ…PCEK) and 168 to 250 (KAHM…KAFE). Basic and acidic residues-rich tracts occupy residues 13–23 (GTDEPAHPCEK) and 178–190 (DRLR…RTRA). Polar residues predominate over residues 218–237 (SRCSFTTPNRPRRTLPSSHP).

Its function is as follows. Required for replication. It likely regulates pTAR copy number. The sequence is that of Replicating protein (repA) from Rhizobium radiobacter (Agrobacterium tumefaciens).